Here is a 184-residue protein sequence, read N- to C-terminus: Adenine phosphoribosyltransferase (184 aa).

The protein belongs to the purine/pyrimidine phosphoribosyltransferase family. Homodimer.

The protein localises to the cytoplasm. It carries out the reaction AMP + diphosphate = 5-phospho-alpha-D-ribose 1-diphosphate + adenine. It participates in purine metabolism; AMP biosynthesis via salvage pathway; AMP from adenine: step 1/1. Its function is as follows. Catalyzes a salvage reaction resulting in the formation of AMP, that is energically less costly than de novo synthesis. The polypeptide is Adenine phosphoribosyltransferase (Paracidovorax citrulli (strain AAC00-1) (Acidovorax citrulli)).